We begin with the raw amino-acid sequence, 439 residues long: Glucose-1-phosphate adenylyltransferase (439 aa).

Residues tyrosine 116, glycine 182, 197-198, and serine 215 each bind alpha-D-glucose 1-phosphate; that span reads EK.

The protein belongs to the bacterial/plant glucose-1-phosphate adenylyltransferase family. In terms of assembly, homotetramer.

The catalysed reaction is alpha-D-glucose 1-phosphate + ATP + H(+) = ADP-alpha-D-glucose + diphosphate. Its pathway is glycan biosynthesis; glycogen biosynthesis. Involved in the biosynthesis of ADP-glucose, a building block required for the elongation reactions to produce glycogen. Catalyzes the reaction between ATP and alpha-D-glucose 1-phosphate (G1P) to produce pyrophosphate and ADP-Glc. In Pasteurella multocida (strain Pm70), this protein is Glucose-1-phosphate adenylyltransferase.